A 276-amino-acid chain; its full sequence is Large ribosomal subunit protein uL2 (276 aa).

The segment at 223–276 is disordered; that stretch reads GAAMNPVDHPHGGGEGRAPRGRPPASPWGWQTKGLKTRKRRKPSSRFIIARRKK. Positions 230-240 are enriched in basic and acidic residues; sequence DHPHGGGEGRA. Residues 257–276 are compositionally biased toward basic residues; sequence LKTRKRRKPSSRFIIARRKK.

This sequence belongs to the universal ribosomal protein uL2 family. In terms of assembly, part of the 50S ribosomal subunit. Forms a bridge to the 30S subunit in the 70S ribosome.

In terms of biological role, one of the primary rRNA binding proteins. Required for association of the 30S and 50S subunits to form the 70S ribosome, for tRNA binding and peptide bond formation. It has been suggested to have peptidyltransferase activity; this is somewhat controversial. Makes several contacts with the 16S rRNA in the 70S ribosome. The sequence is that of Large ribosomal subunit protein uL2 from Thermus thermophilus (strain ATCC BAA-163 / DSM 7039 / HB27).